The following is a 315-amino-acid chain: DNA-directed RNA polymerase subunit alpha (315 aa).

The tract at residues 1–228 (MLEIEKPIIE…EHFKLFMSLT (228 aa)) is alpha N-terminal domain (alpha-NTD). Residues 245–315 (KEKVLEMTVE…LGLCLKLNDE (71 aa)) form an alpha C-terminal domain (alpha-CTD) region.

The protein belongs to the RNA polymerase alpha chain family. In terms of assembly, homodimer. The RNAP catalytic core consists of 2 alpha, 1 beta, 1 beta' and 1 omega subunit. When a sigma factor is associated with the core the holoenzyme is formed, which can initiate transcription.

It catalyses the reaction RNA(n) + a ribonucleoside 5'-triphosphate = RNA(n+1) + diphosphate. Functionally, DNA-dependent RNA polymerase catalyzes the transcription of DNA into RNA using the four ribonucleoside triphosphates as substrates. The sequence is that of DNA-directed RNA polymerase subunit alpha from Clostridium botulinum (strain Alaska E43 / Type E3).